The chain runs to 430 residues: GTPase Obg (430 aa).

The 158-residue stretch at 1–158 folds into the Obg domain; that stretch reads MFVDQVTISL…LDVTLELKLL (158 aa). The segment at 118-145 is disordered; sequence RGGRGGRGNSRFATPRNPAPDFSENGEP. An OBG-type G domain is found at 159–329; the sequence is ADVGLVGFPS…LLYAIADKLD (171 aa). GTP is bound by residues 165–172, 190–194, 212–215, 282–285, and 310–312; these read GFPSVGKS, FTTIK, DLPG, NKMD, and STI. Serine 172 and threonine 192 together coordinate Mg(2+). The OCT domain occupies 352 to 430; it reads KHTPSQDKFT…ILGGEFEFVE (79 aa).

The protein belongs to the TRAFAC class OBG-HflX-like GTPase superfamily. OBG GTPase family. Monomer. The cofactor is Mg(2+).

It is found in the cytoplasm. Its function is as follows. An essential GTPase which binds GTP, GDP and possibly (p)ppGpp with moderate affinity, with high nucleotide exchange rates and a fairly low GTP hydrolysis rate. Plays a role in control of the cell cycle, stress response, ribosome biogenesis and in those bacteria that undergo differentiation, in morphogenesis control. The polypeptide is GTPase Obg (Staphylococcus haemolyticus (strain JCSC1435)).